We begin with the raw amino-acid sequence, 432 residues long: Adenylosuccinate synthetase (432 aa).

Residues 12-18 (GDEGKGK) and 40-42 (GHT) contribute to the GTP site. The active-site Proton acceptor is D13. Mg(2+) is bound by residues D13 and G40. Residues 13–16 (DEGK), 38–41 (NAGH), T128, R142, Q223, T238, and R302 each bind IMP. H41 serves as the catalytic Proton donor. 298–304 (TVTGRPR) provides a ligand contact to substrate. GTP contacts are provided by residues R304, 330–332 (LLD), and 412–414 (SVG).

The protein belongs to the adenylosuccinate synthetase family. As to quaternary structure, homodimer. Mg(2+) serves as cofactor.

The protein resides in the cytoplasm. The enzyme catalyses IMP + L-aspartate + GTP = N(6)-(1,2-dicarboxyethyl)-AMP + GDP + phosphate + 2 H(+). It functions in the pathway purine metabolism; AMP biosynthesis via de novo pathway; AMP from IMP: step 1/2. Plays an important role in the de novo pathway of purine nucleotide biosynthesis. Catalyzes the first committed step in the biosynthesis of AMP from IMP. This is Adenylosuccinate synthetase from Limosilactobacillus reuteri (strain DSM 20016) (Lactobacillus reuteri).